An 88-amino-acid polypeptide reads, in one-letter code: Small ribosomal subunit protein uS17 (88 aa).

This sequence belongs to the universal ribosomal protein uS17 family. Part of the 30S ribosomal subunit.

In terms of biological role, one of the primary rRNA binding proteins, it binds specifically to the 5'-end of 16S ribosomal RNA. This is Small ribosomal subunit protein uS17 from Lactobacillus gasseri (strain ATCC 33323 / DSM 20243 / BCRC 14619 / CIP 102991 / JCM 1131 / KCTC 3163 / NCIMB 11718 / NCTC 13722 / AM63).